Consider the following 309-residue polypeptide: Taste receptor type 2 member 46 (309 aa).

Residue M1 is a topological domain, extracellular. A helical membrane pass occupies residues 2–22; that stretch reads ITFLPIIFSILIVVTFVIGNF. Residues 23–46 are Cytoplasmic-facing; it reads ANGFIALANSIEWFKRQKISFADQ. The chain crosses the membrane as a helical span at residues 47 to 67; that stretch reads ILTALAVSRVGLLWVLLLNWY. Over 68–86 the chain is Extracellular; the sequence is ATELNPAFYSIEVRITAYN. The helical transmembrane segment at 87–107 threads the bilayer; the sequence is VWAVISHFSNWLATSLSIFYL. Over 108 to 126 the chain is Cytoplasmic; that stretch reads LKIANFSNLIFLRLKRRVK. A helical membrane pass occupies residues 127 to 147; the sequence is SVVLVILLGPLLFLVCHLFVI. Topologically, residues 148–178 are extracellular; that stretch reads NMNQIIWTKEYEGNMTWKIKLRSAMYLSDTT. N-linked (GlcNAc...) asparagine glycosylation occurs at N161. Residues 179–199 traverse the membrane as a helical segment; sequence VTILANLVPFTLTLISFLLLI. Over 200 to 229 the chain is Cytoplasmic; that stretch reads CSLCKHLKKMQLHGKGSQDPSMKVHIKALQ. Residues 230–250 form a helical membrane-spanning segment; sequence TVTSFLLLCAIYFLSVIMSVW. The Extracellular segment spans residues 251 to 259; it reads SFESLENKP. Residues 260-280 traverse the membrane as a helical segment; it reads VFMFCEAITFSYPSTHPFILI. Residues 281-309 are Cytoplasmic-facing; sequence WGNKKLKQTFLSVLWHVRYWVKGEKPSSS.

Belongs to the G-protein coupled receptor T2R family.

It localises to the membrane. The protein localises to the cell projection. Its subcellular location is the cilium membrane. Its function is as follows. Receptor that may play a role in the perception of bitterness and is gustducin-linked. May play a role in sensing the chemical composition of the gastrointestinal content. The activity of this receptor may stimulate alpha gustducin, mediate PLC-beta-2 activation and lead to the gating of TRPM5. In airway epithelial cells, binding of bitter compounds increases the intracellular calcium ion concentration and stimulates ciliary beat frequency. The sequence is that of Taste receptor type 2 member 46 (TAS2R46) from Gorilla gorilla gorilla (Western lowland gorilla).